The chain runs to 552 residues: ATP synthase subunit alpha (552 aa).

Gly-173–Ser-180 serves as a coordination point for ATP. The tract at residues Lys-509 to Gly-552 is disordered.

This sequence belongs to the ATPase alpha/beta chains family. As to quaternary structure, F-type ATPases have 2 components, CF(1) - the catalytic core - and CF(0) - the membrane proton channel. CF(1) has five subunits: alpha(3), beta(3), gamma(1), delta(1), epsilon(1). CF(0) has three main subunits: a(1), b(2) and c(9-12). The alpha and beta chains form an alternating ring which encloses part of the gamma chain. CF(1) is attached to CF(0) by a central stalk formed by the gamma and epsilon chains, while a peripheral stalk is formed by the delta and b chains.

The protein resides in the cell membrane. It carries out the reaction ATP + H2O + 4 H(+)(in) = ADP + phosphate + 5 H(+)(out). Produces ATP from ADP in the presence of a proton gradient across the membrane. The alpha chain is a regulatory subunit. This Kineococcus radiotolerans (strain ATCC BAA-149 / DSM 14245 / SRS30216) protein is ATP synthase subunit alpha.